The primary structure comprises 494 residues: Glycerol kinase (494 aa).

Thr12 is an ADP binding site. Positions 12, 13, and 14 each coordinate ATP. Thr12 contacts sn-glycerol 3-phosphate. Residue Arg16 participates in ADP binding. Residues Arg82, Glu83, Tyr134, and Asp241 each contribute to the sn-glycerol 3-phosphate site. The glycerol site is built by Arg82, Glu83, Tyr134, Asp241, and Gln242. 2 residues coordinate ADP: Thr263 and Gly306. Thr263, Gly306, Gln310, and Gly407 together coordinate ATP. ADP is bound at residue Gly407.

The protein belongs to the FGGY kinase family.

It carries out the reaction glycerol + ATP = sn-glycerol 3-phosphate + ADP + H(+). The protein operates within polyol metabolism; glycerol degradation via glycerol kinase pathway; sn-glycerol 3-phosphate from glycerol: step 1/1. Its activity is regulated as follows. Inhibited by fructose 1,6-bisphosphate (FBP). Its function is as follows. Key enzyme in the regulation of glycerol uptake and metabolism. Catalyzes the phosphorylation of glycerol to yield sn-glycerol 3-phosphate. The chain is Glycerol kinase from Brachyspira hyodysenteriae (strain ATCC 49526 / WA1).